The sequence spans 475 residues: Ataxin-10 (475 aa).

At Arg-10 the chain carries Omega-N-methylarginine. Phosphoserine occurs at positions 12 and 77. Thr-82 carries the phosphothreonine modification. Ser-430 carries the post-translational modification Phosphoserine.

It belongs to the ataxin-10 family. Homooligomer. Interacts with GNB2. Interacts with IQCB1. Interacts with OGT. Post-translationally, polyubiquitinated. Phosphorylation at Ser-12 by AURKB promotes the association of ATXN10 with PLK1. Phosphorylation at Ser-77 and Thr-82 by PLK1 may play a role in the regulation of cytokinesis and may stimulate the proteasome-mediated degradation of ATXN10.

It localises to the cytoplasm. It is found in the perinuclear region. The protein resides in the midbody. Its subcellular location is the cytoskeleton. The protein localises to the cilium basal body. It localises to the microtubule organizing center. It is found in the centrosome. The protein resides in the centriole. Functionally, may play a role in the regulation of cytokinesis. May play a role in signaling by stimulating protein glycosylation. Induces neuritogenesis by activating the Ras-MAP kinase pathway and is necessary for the survival of cerebellar neurons. Does not appear to play a major role in ciliogenesis. The sequence is that of Ataxin-10 (ATXN10) from Macaca fascicularis (Crab-eating macaque).